Consider the following 148-residue polypeptide: NADH-quinone oxidoreductase subunit K 2 (148 aa).

3 consecutive transmembrane segments (helical) span residues 3–23 (LAYPAVLAALLFCVGLYGVLA), 28–48 (ILVLMSVELMLNAVNLNLVAF), and 64–84 (LFTIAIAAAEIGIGLAIVLAV). Residues 96–148 (LRDTAETDAAETLPDDAGTGPSGTDAAPNGDTTTATGRPGDNAGKNKKAEATR) form a disordered region.

Belongs to the complex I subunit 4L family. As to quaternary structure, NDH-1 is composed of 14 different subunits. Subunits NuoA, H, J, K, L, M, N constitute the membrane sector of the complex.

It is found in the cell membrane. The enzyme catalyses a quinone + NADH + 5 H(+)(in) = a quinol + NAD(+) + 4 H(+)(out). Functionally, NDH-1 shuttles electrons from NADH, via FMN and iron-sulfur (Fe-S) centers, to quinones in the respiratory chain. The immediate electron acceptor for the enzyme in this species is believed to be a menaquinone. Couples the redox reaction to proton translocation (for every two electrons transferred, four hydrogen ions are translocated across the cytoplasmic membrane), and thus conserves the redox energy in a proton gradient. This Streptomyces griseus subsp. griseus (strain JCM 4626 / CBS 651.72 / NBRC 13350 / KCC S-0626 / ISP 5235) protein is NADH-quinone oxidoreductase subunit K 2.